We begin with the raw amino-acid sequence, 363 residues long: Ankyrin repeat domain-containing protein 40 (363 aa).

Residue Met1 is modified to N-acetylmethionine. ANK repeat units lie at residues 9-38 (EQQERLREAAALGDIREVQKLVESGVDVNS) and 43-72 (NGWTCLHWACKRNHGQVVSYLLQSGADREI). Positions 135 to 167 (DSTQLQNGGPSPPPVSPPADSSPPLLPPTETPL) are disordered. Residues 144-164 (PSPPPVSPPADSSPPLLPPTE) show a composition bias toward pro residues. Residue Ser176 is modified to Phosphoserine.

In Mus musculus (Mouse), this protein is Ankyrin repeat domain-containing protein 40 (Ankrd40).